Consider the following 138-residue polypeptide: Putative pre-16S rRNA nuclease (138 aa).

Belongs to the YqgF nuclease family.

It is found in the cytoplasm. Could be a nuclease involved in processing of the 5'-end of pre-16S rRNA. The sequence is that of Putative pre-16S rRNA nuclease from Cronobacter sakazakii (strain ATCC BAA-894) (Enterobacter sakazakii).